The chain runs to 347 residues: Phosphoribosylformylglycinamidine cyclo-ligase (347 aa).

It belongs to the AIR synthase family.

It is found in the cytoplasm. It carries out the reaction 2-formamido-N(1)-(5-O-phospho-beta-D-ribosyl)acetamidine + ATP = 5-amino-1-(5-phospho-beta-D-ribosyl)imidazole + ADP + phosphate + H(+). It participates in purine metabolism; IMP biosynthesis via de novo pathway; 5-amino-1-(5-phospho-D-ribosyl)imidazole from N(2)-formyl-N(1)-(5-phospho-D-ribosyl)glycinamide: step 2/2. The chain is Phosphoribosylformylglycinamidine cyclo-ligase from Yersinia pseudotuberculosis serotype O:1b (strain IP 31758).